We begin with the raw amino-acid sequence, 729 residues long: ATP-dependent RNA helicase DHX15 homolog (729 aa).

A disordered region spans residues 1 to 25 (MSKRRIEVGETYGSKAKKDPEASSS). Positions 82-246 (MRLLSLHQCI…FDNAPLMKVP (165 aa)) constitute a Helicase ATP-binding domain. 95–102 (GETGSGKT) contributes to the ATP binding site. Positions 193-196 (DEAH) match the DEAH box motif. A Helicase C-terminal domain is found at 271-451 (TVIQIHMCEE…TVVLQLKKLG (181 aa)).

This sequence belongs to the DEAD box helicase family. DEAH subfamily. DDX15/PRP43 sub-subfamily.

It carries out the reaction ATP + H2O = ADP + phosphate + H(+). Its function is as follows. RNA helicase involved in mRNA processing and antiviral innate immunity. Acts as an activator of the p38 MAPK cascade. The chain is ATP-dependent RNA helicase DHX15 homolog from Drosophila melanogaster (Fruit fly).